The following is a 100-amino-acid chain: MGWRNGKLTPQSGVHYVAEGLPFNWTKVNTEGRKTFSAFAELEAAKEKVAILAVRADPAFGNLWHQLNAEVVDRCRRRNPLCMQTLFQRLLSAKSCTFIA.

This is an uncharacterized protein from Rhizobium leguminosarum bv. phaseoli.